The sequence spans 502 residues: Sulfate adenylyltransferase (502 aa).

The segment at 1–167 (MPSPHGGVLQ…LEAIQLPVHY (167 aa)) is N-terminal. The segment at 168-393 (DYPGWRKTPA…LRESNPSRPK (226 aa)) is catalytic. Residue Q195 coordinates sulfate. ATP contacts are provided by residues 195-198 (QTRN) and 289-292 (GRDH). Active-site residues include T196, R197, and N198. Residue R197 participates in sulfate binding. A293 serves as a coordination point for sulfate. V331 is an ATP binding site. The required for oligomerization; adenylyl-sulfate kinase-like stretch occupies residues 394 to 502 (QGFALVLSET…FLEDQGFFQF (109 aa)).

It belongs to the sulfate adenylyltransferase family. Homohexamer. Dimer of trimers.

The protein localises to the cytoplasm. It catalyses the reaction sulfate + ATP + H(+) = adenosine 5'-phosphosulfate + diphosphate. It functions in the pathway sulfur metabolism; hydrogen sulfide biosynthesis; sulfite from sulfate: step 1/3. In terms of biological role, catalyzes the first intracellular reaction of sulfate assimilation, forming adenosine-5'-phosphosulfate (APS) from inorganic sulfate and ATP. Plays an important role in sulfate activation as a component of the biosynthesis pathway of sulfur-containing amino acids. This is Sulfate adenylyltransferase from Kluyveromyces lactis (strain ATCC 8585 / CBS 2359 / DSM 70799 / NBRC 1267 / NRRL Y-1140 / WM37) (Yeast).